A 238-amino-acid polypeptide reads, in one-letter code: Cell division protein A (238 aa).

Interacts with CdvB.

The protein resides in the cytoplasm. It localises to the nucleoid. It is found in the cell membrane. Functionally, part of a cell division machinery. The CdvA, CdvB and CdvC proteins polymerize between segregating nucleoids and persist throughout cell division, forming a successively smaller structure during constriction. CdvA is a membrane interacting protein that recruits ESCRT-III homologs to the membrane. This Sulfolobus acidocaldarius (strain ATCC 33909 / DSM 639 / JCM 8929 / NBRC 15157 / NCIMB 11770) protein is Cell division protein A.